We begin with the raw amino-acid sequence, 527 residues long: Tubulin-specific chaperone E (527 aa).

Ser-2 carries the N-acetylserine modification. A CAP-Gly domain is found at Gly-27–Arg-71. LRR repeat units follow at residues Asn-154–Ala-175, His-180–Thr-200, Val-205–Ala-226, Gly-230–Gln-252, Thr-253–Ala-274, Arg-278–Ile-299, and Ser-308–Glu-329. The 43-residue stretch at Asn-342–Asp-384 folds into the LRRCT domain. Position 463 is an N6-acetyllysine (Lys-463). Phosphoserine is present on Ser-495.

It belongs to the TBCE family. As to quaternary structure, supercomplex made of cofactors A to E. Cofactors A and D function by capturing and stabilizing tubulin in a quasi-native conformation. Cofactor E binds to the cofactor D-tubulin complex; interaction with cofactor C then causes the release of tubulin polypeptides that are committed to the native state. Cofactors B and E can form a heterodimer which binds to alpha-tubulin and enhances their ability to dissociate tubulin heterodimers. Interacts with TBCD.

It localises to the cytoplasm. It is found in the cytoskeleton. Tubulin-folding protein; involved in the second step of the tubulin folding pathway and in the regulation of tubulin heterodimer dissociation. Required for correct organization of microtubule cytoskeleton and mitotic splindle, and maintenance of the neuronal microtubule network. The chain is Tubulin-specific chaperone E (TBCE) from Homo sapiens (Human).